The sequence spans 506 residues: Arabinose import ATP-binding protein AraG (506 aa).

2 consecutive ABC transporter domains span residues 10 to 245 (LEFC…MVGR) and 253 to 501 (YRSR…MLGN). 42 to 49 (GENGAGKS) provides a ligand contact to ATP.

This sequence belongs to the ABC transporter superfamily. Arabinose importer (TC 3.A.1.2.2) family. The complex is composed of two ATP-binding proteins (AraG), two transmembrane proteins (AraH) and a solute-binding protein (AraF).

The protein resides in the cell inner membrane. It carries out the reaction L-arabinose(out) + ATP + H2O = L-arabinose(in) + ADP + phosphate + H(+). Part of the ABC transporter complex AraFGH involved in arabinose import. Responsible for energy coupling to the transport system. The polypeptide is Arabinose import ATP-binding protein AraG (Vibrio parahaemolyticus serotype O3:K6 (strain RIMD 2210633)).